Reading from the N-terminus, the 266-residue chain is Putative carbamate hydrolase RutD (266 aa).

In terms of domain architecture, AB hydrolase-1 spans 14–116 (PVVVLISGLG…VLVSVNGWLR (103 aa)).

It belongs to the AB hydrolase superfamily. Hydrolase RutD family.

It catalyses the reaction carbamate + 2 H(+) = NH4(+) + CO2. Functionally, involved in pyrimidine catabolism. May facilitate the hydrolysis of carbamate, a reaction that can also occur spontaneously. The polypeptide is Putative carbamate hydrolase RutD (Escherichia coli O81 (strain ED1a)).